Consider the following 309-residue polypeptide: uncharacterized protein (309 aa).

The protein belongs to the OprB family.

This is an uncharacterized protein from Aquifex aeolicus (strain VF5).